The following is a 249-amino-acid chain: Large ribosomal subunit protein uL30A (249 aa).

This sequence belongs to the universal ribosomal protein uL30 family. As to quaternary structure, component of the small ribosomal subunit (SSU). Mature yeast ribosomes consist of a small (40S) and a large (60S) subunit. The 40S small subunit contains 1 molecule of ribosomal RNA (18S rRNA) and at least 33 different proteins. The large 60S subunit contains 3 rRNA molecules (25S, 5.8S and 5S rRNA) and at least 46 different proteins.

The protein resides in the cytoplasm. It is found in the nucleus. Its subcellular location is the nucleolus. Functionally, component of the ribosome, a large ribonucleoprotein complex responsible for the synthesis of proteins in the cell. The small ribosomal subunit (SSU) binds messenger RNAs (mRNAs) and translates the encoded message by selecting cognate aminoacyl-transfer RNA (tRNA) molecules. The large subunit (LSU) contains the ribosomal catalytic site termed the peptidyl transferase center (PTC), which catalyzes the formation of peptide bonds, thereby polymerizing the amino acids delivered by tRNAs into a polypeptide chain. The nascent polypeptides leave the ribosome through a tunnel in the LSU and interact with protein factors that function in enzymatic processing, targeting, and the membrane insertion of nascent chains at the exit of the ribosomal tunnel. This chain is Large ribosomal subunit protein uL30A (rlp7), found in Schizosaccharomyces pombe (strain 972 / ATCC 24843) (Fission yeast).